Consider the following 504-residue polypeptide: Histidine ammonia-lyase (504 aa).

Residues 142 to 144 (ASG) constitute a cross-link (5-imidazolinone (Ala-Gly)). Ser143 bears the 2,3-didehydroalanine (Ser) mark.

It belongs to the PAL/histidase family. In terms of processing, contains an active site 4-methylidene-imidazol-5-one (MIO), which is formed autocatalytically by cyclization and dehydration of residues Ala-Ser-Gly.

The protein resides in the cytoplasm. The catalysed reaction is L-histidine = trans-urocanate + NH4(+). It functions in the pathway amino-acid degradation; L-histidine degradation into L-glutamate; N-formimidoyl-L-glutamate from L-histidine: step 1/3. The chain is Histidine ammonia-lyase from Staphylococcus aureus (strain USA300).